The following is a 176-amino-acid chain: Nucleoside triphosphate/diphosphate phosphatase (176 aa).

Arg23 functions as the Proton donor in the catalytic mechanism. Positions 87, 103, 105, 107, 120, and 123 each coordinate Mg(2+).

Belongs to the Ntdp family. Mg(2+) serves as cofactor.

It carries out the reaction a ribonucleoside 5'-triphosphate + H2O = a ribonucleoside 5'-diphosphate + phosphate + H(+). It catalyses the reaction a ribonucleoside 5'-diphosphate + H2O = a ribonucleoside 5'-phosphate + phosphate + H(+). Functionally, has nucleoside phosphatase activity towards nucleoside triphosphates and nucleoside diphosphates. The protein is Nucleoside triphosphate/diphosphate phosphatase of Bacillus licheniformis (strain ATCC 14580 / DSM 13 / JCM 2505 / CCUG 7422 / NBRC 12200 / NCIMB 9375 / NCTC 10341 / NRRL NRS-1264 / Gibson 46).